Reading from the N-terminus, the 168-residue chain is INO80 complex subunit 3 (168 aa).

A compositionally biased stretch (polar residues) spans 115–129 (TNSTLSTPKSFHSPL). The disordered stretch occupies residues 115–168 (TNSTLSTPKSFHSPLQSRGISPSSAQSSAAVSSSRKQKRKRTSEGPSERRARKK). The segment covering 130–148 (QSRGISPSSAQSSAAVSSS) has biased composition (low complexity). Residues 156–168 (TSEGPSERRARKK) show a composition bias toward basic and acidic residues.

In terms of assembly, component of the INO80 chromatin remodeling complex.

Its subcellular location is the nucleus. Its function is as follows. Component of the INO80 complex which remodels chromatin by shifting nucleosomes and is involved in DNA repair. This Schizosaccharomyces pombe (strain 972 / ATCC 24843) (Fission yeast) protein is INO80 complex subunit 3 (iec3).